Here is a 458-residue protein sequence, read N- to C-terminus: ATP synthase subunit beta (458 aa).

148–155 (GGAGVGKT) serves as a coordination point for ATP.

It belongs to the ATPase alpha/beta chains family. F-type ATPases have 2 components, CF(1) - the catalytic core - and CF(0) - the membrane proton channel. CF(1) has five subunits: alpha(3), beta(3), gamma(1), delta(1), epsilon(1). CF(0) has three main subunits: a(1), b(2) and c(9-12). The alpha and beta chains form an alternating ring which encloses part of the gamma chain. CF(1) is attached to CF(0) by a central stalk formed by the gamma and epsilon chains, while a peripheral stalk is formed by the delta and b chains.

The protein localises to the cell inner membrane. The enzyme catalyses ATP + H2O + 4 H(+)(in) = ADP + phosphate + 5 H(+)(out). Its function is as follows. Produces ATP from ADP in the presence of a proton gradient across the membrane. The catalytic sites are hosted primarily by the beta subunits. In Francisella tularensis subsp. tularensis (strain FSC 198), this protein is ATP synthase subunit beta.